The chain runs to 316 residues: Acetaldehyde dehydrogenase (316 aa).

12 to 15 contributes to the NAD(+) binding site; that stretch reads SGNI. The active-site Acyl-thioester intermediate is Cys132. Residues 163-171 and Asn289 contribute to the NAD(+) site; that span reads SAGPGTRAN.

This sequence belongs to the acetaldehyde dehydrogenase family.

It carries out the reaction acetaldehyde + NAD(+) + CoA = acetyl-CoA + NADH + H(+). The sequence is that of Acetaldehyde dehydrogenase (bphG) from Bordetella avium (strain 197N).